Reading from the N-terminus, the 174-residue chain is MASLTRAVTRLAIAGRQAVRTIATTTPVSGHGDDIMEKWPADKFDNHFINYLNRPEIDGWEVRKALSELHDYDVIPDPKVVEAALRACRRVNDFALAVRFLEAIKIKCGAQKNRDTVYAYIVKQVEPVLKELGIDTPEQLGYGEPEFFVPEPEYWWEKKWYKDYGYDKHPNIQI.

The N-terminal 29 residues, 1-29, are a transit peptide targeting the mitochondrion; that stretch reads MASLTRAVTRLAIAGRQAVRTIATTTPVS.

It belongs to the cytochrome c oxidase subunit 5A family. Component of the cytochrome c oxidase (complex IV, CIV), a multisubunit enzyme composed of a catalytic core of 3 subunits and several supernumerary subunits. The complex exists as a monomer or a dimer and forms supercomplexes (SCs) in the inner mitochondrial membrane with ubiquinol-cytochrome c oxidoreductase (cytochrome b-c1 complex, complex III, CIII).

The protein localises to the mitochondrion inner membrane. It participates in energy metabolism; oxidative phosphorylation. Its function is as follows. Component of the cytochrome c oxidase, the last enzyme in the mitochondrial electron transport chain which drives oxidative phosphorylation. The respiratory chain contains 3 multisubunit complexes succinate dehydrogenase (complex II, CII), ubiquinol-cytochrome c oxidoreductase (cytochrome b-c1 complex, complex III, CIII) and cytochrome c oxidase (complex IV, CIV), that cooperate to transfer electrons derived from NADH and succinate to molecular oxygen, creating an electrochemical gradient over the inner membrane that drives transmembrane transport and the ATP synthase. Cytochrome c oxidase is the component of the respiratory chain that catalyzes the reduction of oxygen to water. Electrons originating from reduced cytochrome c in the intermembrane space (IMS) are transferred via the dinuclear copper A center (CU(A)) of subunit 2 and heme A of subunit 1 to the active site in subunit 1, a binuclear center (BNC) formed by heme A3 and copper B (CU(B)). The BNC reduces molecular oxygen to 2 water molecules using 4 electrons from cytochrome c in the IMS and 4 protons from the mitochondrial matrix. The chain is Cytochrome c oxidase subunit 5A, mitochondrial from Caenorhabditis elegans.